Consider the following 388-residue polypeptide: MSAGPIVERNQDATIYVGGLDEKVSESILWELMVQAGPVVSVNMPKDRVTANHQGFGFVEFMGEEDADYAIKILNMIKLYGKPIKVNKASAHEKNMDVGANIFVGNLDPEVDEKLLYDTFSAFGVILQVPKIMRDVDSGTSKGFAFINFASFEASDTALEAMNGQFLCNRAITVSYAFKRDSKGERHGTAAERMLAAQNPLFPKDRPHQVFSDVPLGVPANTPLAMPGVHAAIAAHATGRPGYQPPPLMGMAQSGYQGQYPPVPPPPPSVTPMPPPMPPTPGMTPRPPPPPSSGMWPPPPPPPPGRTPGPPGMPGMPPPPPPSRFGPPGMGGMPPPPPPGMRYPGGMPPPPPPRYPSAGPGMYPPPPPSRPPAPPSGHGMIPPPPPPS.

RRM domains follow at residues 13-91 (ATIY…KASA) and 100-179 (ANIF…YAFK). The interval 244–388 (QPPPLMGMAQ…GMIPPPPPPS (145 aa)) is disordered. Composition is skewed to pro residues over residues 261–325 (PPVP…PSRF), 333–355 (MPPP…PPRY), and 362–388 (MYPP…PPPS).

Belongs to the SF3B4 family.

Its subcellular location is the nucleus. In terms of biological role, subunit of the splicing factor SF3B required for 'A' complex assembly formed by the stable binding of U2 snRNP to the branchpoint sequence (BPS) in pre-mRNA. Sequence independent binding of SF3A/SF3B complex upstream of the branch site is essential, it may anchor U2 snRNP to the pre-mRNA. May also be involved in the assembly of the 'E' complex. SF3B4 has been found in complex 'B' and 'C' as well. Belongs also to the minor U12-dependent spliceosome, which is involved in the splicing of rare class of nuclear pre-mRNA intron. The protein is Splicing factor 3B subunit 4 (sap-49) of Caenorhabditis elegans.